The chain runs to 633 residues: Threonine--tRNA ligase (633 aa).

The TGS domain maps to Met-1–Thr-61. A catalytic region spans residues Asp-242 to Pro-533. The Zn(2+) site is built by Cys-333, His-384, and His-510.

The protein belongs to the class-II aminoacyl-tRNA synthetase family. Homodimer. Requires Zn(2+) as cofactor.

The protein localises to the cytoplasm. It carries out the reaction tRNA(Thr) + L-threonine + ATP = L-threonyl-tRNA(Thr) + AMP + diphosphate + H(+). Functionally, catalyzes the attachment of threonine to tRNA(Thr) in a two-step reaction: L-threonine is first activated by ATP to form Thr-AMP and then transferred to the acceptor end of tRNA(Thr). Also edits incorrectly charged L-seryl-tRNA(Thr). The protein is Threonine--tRNA ligase of Ehrlichia ruminantium (strain Gardel).